Here is a 144-residue protein sequence, read N- to C-terminus: RxLR effector protein PITG_03192 (144 aa).

The first 24 residues, M1–A24, serve as a signal peptide directing secretion. The RxLR-dEER signature appears at R49 to R58. N-linked (GlcNAc...) asparagine glycosylation occurs at N115. The chain crosses the membrane as a helical span at residues F122–Y142.

It belongs to the RxLR effector family. As to quaternary structure, interacts with the C-terminal portions the ER-associated potato NAC transcription factors NTP1 and NTP2.

It is found in the secreted. The protein resides in the host endoplasmic reticulum membrane. In terms of biological role, effector that is required for full virulence. Targets host NTP1 and NTP2 transcription factors and prevents their pathogen-associated molecular pattern (PAMP)-triggered re-localization from the endoplasmic reticulum into the nucleus, where they contribute to prevent disease progression by P.infestans. This is RxLR effector protein PITG_03192 from Phytophthora infestans (strain T30-4) (Potato late blight agent).